Here is a 393-residue protein sequence, read N- to C-terminus: NAD(P)H-quinone oxidoreductase subunit H, chloroplastic (393 aa).

It belongs to the complex I 49 kDa subunit family. In terms of assembly, NDH is composed of at least 16 different subunits, 5 of which are encoded in the nucleus.

It is found in the plastid. Its subcellular location is the chloroplast thylakoid membrane. It carries out the reaction a plastoquinone + NADH + (n+1) H(+)(in) = a plastoquinol + NAD(+) + n H(+)(out). The enzyme catalyses a plastoquinone + NADPH + (n+1) H(+)(in) = a plastoquinol + NADP(+) + n H(+)(out). Functionally, NDH shuttles electrons from NAD(P)H:plastoquinone, via FMN and iron-sulfur (Fe-S) centers, to quinones in the photosynthetic chain and possibly in a chloroplast respiratory chain. The immediate electron acceptor for the enzyme in this species is believed to be plastoquinone. Couples the redox reaction to proton translocation, and thus conserves the redox energy in a proton gradient. This Spinacia oleracea (Spinach) protein is NAD(P)H-quinone oxidoreductase subunit H, chloroplastic.